The following is a 364-amino-acid chain: Developmentally-regulated GTP-binding protein 2 (364 aa).

A (3S)-3-hydroxylysine modification is found at Lys21. In terms of domain architecture, OBG-type G spans 63 to 288; sequence ARVALIGFPS…LLEMLWEYLA (226 aa). GTP is bound by residues 69-76, 94-98, 115-118, 246-249, and 269-271; these read GFPSVGKS, FTTLT, DLPG, NKID, and SCG. Mg(2+) is bound by residues Ser76 and Thr96. One can recognise a TGS domain in the interval 288–363; the sequence is ALTCIYTKKR…EHEDVIQIVK (76 aa).

The protein belongs to the TRAFAC class OBG-HflX-like GTPase superfamily. OBG GTPase family. In terms of assembly, interacts with RWDD1; this interaction confers protection to polyubiquitination and proteolytic degradation. Interacts with JMJD7; this interaction is direct. Mg(2+) is required as a cofactor. In terms of processing, polyubiquitinated. Post-translationally, hydroxylated (with S stereochemistry) at C-3 of Lys-21 by JMJD7.

It localises to the nucleus. Its subcellular location is the cytoplasm. The catalysed reaction is GTP + H2O = GDP + phosphate + H(+). In terms of biological role, catalyzes the conversion of GTP to GDP through hydrolysis of the gamma-phosphate bond in GTP. When hydroxylated at C-3 of 'Lys-21' by JMJD7, may bind to RNA and play a role in translation. This is Developmentally-regulated GTP-binding protein 2 (DRG2) from Bos taurus (Bovine).